The chain runs to 468 residues: Secretogranin-3 (468 aa).

The N-terminal stretch at 1–19 is a signal peptide; it reads MGFLGTGTWILVLVLPIQA. The disordered stretch occupies residues 23–69; it reads PGGSQDKSLHNRELSAERPLNEQIAEAEEDKIKKTYPPENKPGQSNY. Residues 29-42 show a composition bias toward basic and acidic residues; that stretch reads KSLHNRELSAERPL. Position 37 is a phosphoserine (Ser-37). Ser-37 is a glycosylation site (O-linked (Xyl...) (chondroitin sulfate) serine). O-linked (GalNAc...) threonine glycans are attached at residues Thr-216 and Thr-231. The interval 353–406 is disordered; it reads KLFPAPSEKSHEETDSTKEEAAKMEKEYGSLKDSTKDDNSNPGGKTDEPKGKTE. O-linked (GalNAc...) serine glycosylation occurs at Ser-359. Over residues 360-406 the composition is skewed to basic and acidic residues; it reads EKSHEETDSTKEEAAKMEKEYGSLKDSTKDDNSNPGGKTDEPKGKTE. At Ser-362 the chain carries Phosphoserine.

Interacts with CHGA. Interacts with secretogranin II/SCG2. Interacts (via C-terminus) with CPE. Post-translationally, O-glycosylated. In terms of tissue distribution, detected in urine (at protein level). Expressed in brain, heart, kidney, liver and skeletal muscle.

The protein resides in the cytoplasmic vesicle. Its subcellular location is the secretory vesicle. It localises to the secretory vesicle membrane. The protein localises to the secreted. Member of the granin protein family that regulates the biogenesis of secretory granules. Acts as a sorting receptor for intragranular proteins including chromogranin A/CHGA. May also play a role in angiogenesis. Promotes endothelial proliferation, migration and tube formation through MEK/ERK signaling pathway. The protein is Secretogranin-3 (SCG3) of Homo sapiens (Human).